A 183-amino-acid polypeptide reads, in one-letter code: NAD(P)H-quinone oxidoreductase subunit J (183 aa).

Positions 1–21 are disordered; that stretch reads MAEENAQEKQAPPSAGEQSEP.

The protein belongs to the complex I 30 kDa subunit family. As to quaternary structure, NDH-1 can be composed of about 15 different subunits; different subcomplexes with different compositions have been identified which probably have different functions.

It is found in the cellular thylakoid membrane. The enzyme catalyses a plastoquinone + NADH + (n+1) H(+)(in) = a plastoquinol + NAD(+) + n H(+)(out). It carries out the reaction a plastoquinone + NADPH + (n+1) H(+)(in) = a plastoquinol + NADP(+) + n H(+)(out). In terms of biological role, NDH-1 shuttles electrons from an unknown electron donor, via FMN and iron-sulfur (Fe-S) centers, to quinones in the respiratory and/or the photosynthetic chain. The immediate electron acceptor for the enzyme in this species is believed to be plastoquinone. Couples the redox reaction to proton translocation, and thus conserves the redox energy in a proton gradient. Cyanobacterial NDH-1 also plays a role in inorganic carbon-concentration. This is NAD(P)H-quinone oxidoreductase subunit J from Synechococcus sp. (strain JA-2-3B'a(2-13)) (Cyanobacteria bacterium Yellowstone B-Prime).